Consider the following 344-residue polypeptide: Alkyl hydroperoxide reductase Rv2159c (344 aa).

The segment at 49-50 (AG) is important for interaction with PknI. The active-site Cysteine sulfenic acid (-SOH) intermediate is the cysteine 84.

Belongs to the AhpD family. Interacts with the serine/threonine-protein kinase PknI. The PknI-Rv2159c interaction is mediated through phosphorylation independent physical interaction.

With respect to regulation, interaction with PknI increases the peroxidase activity by several folds. Involved in protection against oxidative stresses. May play a significant role in maintaining the cellular homeostasis during stress and virulence of M.tuberculosis. In vitro, catalyzes the decomposition of cumene hydroperoxide (CHP) to acetophenone. The protein is Alkyl hydroperoxide reductase Rv2159c of Mycobacterium tuberculosis (strain ATCC 25618 / H37Rv).